The primary structure comprises 245 residues: Exosome complex component RRP41 (245 aa).

Residue Ala-2 is modified to N-acetylalanine.

This sequence belongs to the RNase PH family. In terms of assembly, component of the RNA exosome core complex (Exo-9), composed of EXOSC1, EXOSC2, EXOSC3, EXOSC4, EXOSC5, EXOSC6, EXOSC7, EXOSC8 and EXOSC9; within the complex interacts with EXOSC2, EXOSC7 and EXOSC9. The catalytically inactive RNA exosome core complex (Exo-9) associates with the catalytic subunit EXOSC10/RRP6. Exo-9 may associate with DIS3 to form the nucleolar exosome complex, or DIS3L to form the cytoplasmic exosome complex. Exo-9 is formed by a hexameric base ring consisting of the heterodimers EXOSC4-EXOSC9, EXOSC5-EXOSC8 and EXOSC6-EXOSC7, and a cap ring consisting of EXOSC1, EXOSC2 and EXOSC3. The RNA exosome complex associates with cofactors C1D/RRP47, MPHOSPH6/MPP6 and MTREX/MTR4. Interacts with DDX60. Interacts with DIS3; the interaction is direct.

It localises to the cytoplasm. The protein localises to the nucleus. Its subcellular location is the nucleolus. The protein resides in the nucleoplasm. Non-catalytic component of the RNA exosome complex which has 3'-&gt;5' exoribonuclease activity and participates in a multitude of cellular RNA processing and degradation events. In the nucleus, the RNA exosome complex is involved in proper maturation of stable RNA species such as rRNA, snRNA and snoRNA, in the elimination of RNA processing by-products and non-coding 'pervasive' transcripts, such as antisense RNA species and promoter-upstream transcripts (PROMPTs), and of mRNAs with processing defects, thereby limiting or excluding their export to the cytoplasm. The RNA exosome may be involved in Ig class switch recombination (CSR) and/or Ig variable region somatic hypermutation (SHM) by targeting AICDA deamination activity to transcribed dsDNA substrates. In the cytoplasm, the RNA exosome complex is involved in general mRNA turnover and specifically degrades inherently unstable mRNAs containing AU-rich elements (AREs) within their 3' untranslated regions, and in RNA surveillance pathways, preventing translation of aberrant mRNAs. It seems to be involved in degradation of histone mRNA. The catalytic inactive RNA exosome core complex of 9 subunits (Exo-9) is proposed to play a pivotal role in the binding and presentation of RNA for ribonucleolysis, and to serve as a scaffold for the association with catalytic subunits and accessory proteins or complexes. EXOSC4 binds to ARE-containing RNAs. This chain is Exosome complex component RRP41 (Exosc4), found in Mus musculus (Mouse).